Consider the following 180-residue polypeptide: Nucleoside-triphosphatase THEP1 (180 aa).

ATP is bound by residues 9–16 (GPAGVGKT) and 104–111 (LIVIDEIG).

It belongs to the THEP1 NTPase family.

The enzyme catalyses a ribonucleoside 5'-triphosphate + H2O = a ribonucleoside 5'-diphosphate + phosphate + H(+). Functionally, has nucleotide phosphatase activity towards ATP, GTP, CTP, TTP and UTP. May hydrolyze nucleoside diphosphates with lower efficiency. The protein is Nucleoside-triphosphatase THEP1 of Thermococcus kodakarensis (strain ATCC BAA-918 / JCM 12380 / KOD1) (Pyrococcus kodakaraensis (strain KOD1)).